Consider the following 355-residue polypeptide: UDP-N-acetylglucosamine--N-acetylmuramyl-(pentapeptide) pyrophosphoryl-undecaprenol N-acetylglucosamine transferase (355 aa).

UDP-N-acetyl-alpha-D-glucosamine-binding positions include 13 to 15 (TGG), Asn-125, Arg-162, Ser-190, Ile-244, and Gln-289.

It belongs to the glycosyltransferase 28 family. MurG subfamily.

It is found in the cell inner membrane. It carries out the reaction di-trans,octa-cis-undecaprenyl diphospho-N-acetyl-alpha-D-muramoyl-L-alanyl-D-glutamyl-meso-2,6-diaminopimeloyl-D-alanyl-D-alanine + UDP-N-acetyl-alpha-D-glucosamine = di-trans,octa-cis-undecaprenyl diphospho-[N-acetyl-alpha-D-glucosaminyl-(1-&gt;4)]-N-acetyl-alpha-D-muramoyl-L-alanyl-D-glutamyl-meso-2,6-diaminopimeloyl-D-alanyl-D-alanine + UDP + H(+). The protein operates within cell wall biogenesis; peptidoglycan biosynthesis. Functionally, cell wall formation. Catalyzes the transfer of a GlcNAc subunit on undecaprenyl-pyrophosphoryl-MurNAc-pentapeptide (lipid intermediate I) to form undecaprenyl-pyrophosphoryl-MurNAc-(pentapeptide)GlcNAc (lipid intermediate II). This Neisseria meningitidis serogroup B (strain ATCC BAA-335 / MC58) protein is UDP-N-acetylglucosamine--N-acetylmuramyl-(pentapeptide) pyrophosphoryl-undecaprenol N-acetylglucosamine transferase.